The primary structure comprises 727 residues: DNA ligase (727 aa).

NAD(+)-binding positions include 71-75 (DGEFD), 120-121 (SL), and Glu-150. Lys-152 acts as the N6-AMP-lysine intermediate in catalysis. Arg-173, Glu-213, Lys-329, and Lys-353 together coordinate NAD(+). Residues Cys-447, Cys-450, Cys-466, and Cys-472 each contribute to the Zn(2+) site. The region spanning 636-725 (SIERHLTGLS…PEAAAEAALP (90 aa)) is the BRCT domain.

It belongs to the NAD-dependent DNA ligase family. LigA subfamily. Mg(2+) is required as a cofactor. It depends on Mn(2+) as a cofactor.

It carries out the reaction NAD(+) + (deoxyribonucleotide)n-3'-hydroxyl + 5'-phospho-(deoxyribonucleotide)m = (deoxyribonucleotide)n+m + AMP + beta-nicotinamide D-nucleotide.. In terms of biological role, DNA ligase that catalyzes the formation of phosphodiester linkages between 5'-phosphoryl and 3'-hydroxyl groups in double-stranded DNA using NAD as a coenzyme and as the energy source for the reaction. It is essential for DNA replication and repair of damaged DNA. The protein is DNA ligase of Saccharopolyspora erythraea (strain ATCC 11635 / DSM 40517 / JCM 4748 / NBRC 13426 / NCIMB 8594 / NRRL 2338).